The sequence spans 292 residues: Ribosomal protein L11 methyltransferase (292 aa).

Residues T136, G159, D181, and N228 each coordinate S-adenosyl-L-methionine.

The protein belongs to the methyltransferase superfamily. PrmA family.

Its subcellular location is the cytoplasm. The catalysed reaction is L-lysyl-[protein] + 3 S-adenosyl-L-methionine = N(6),N(6),N(6)-trimethyl-L-lysyl-[protein] + 3 S-adenosyl-L-homocysteine + 3 H(+). Its function is as follows. Methylates ribosomal protein L11. The protein is Ribosomal protein L11 methyltransferase of Rhizobium etli (strain CIAT 652).